A 597-amino-acid chain; its full sequence is Elongation factor 4 (597 aa).

The tr-type G domain occupies 2–184 (QHIRNFSIIA…AVISRIPPPK (183 aa)). Residues 14 to 19 (DHGKST) and 131 to 134 (NKID) contribute to the GTP site.

This sequence belongs to the TRAFAC class translation factor GTPase superfamily. Classic translation factor GTPase family. LepA subfamily.

The protein localises to the cell inner membrane. It carries out the reaction GTP + H2O = GDP + phosphate + H(+). Functionally, required for accurate and efficient protein synthesis under certain stress conditions. May act as a fidelity factor of the translation reaction, by catalyzing a one-codon backward translocation of tRNAs on improperly translocated ribosomes. Back-translocation proceeds from a post-translocation (POST) complex to a pre-translocation (PRE) complex, thus giving elongation factor G a second chance to translocate the tRNAs correctly. Binds to ribosomes in a GTP-dependent manner. The chain is Elongation factor 4 from Nitrosospira multiformis (strain ATCC 25196 / NCIMB 11849 / C 71).